We begin with the raw amino-acid sequence, 221 residues long: Glutathione S-transferase (221 aa).

A GST N-terminal domain is found at 3-83 (GKPVLHYANT…YIAGKYNLYG (81 aa)). Glutathione contacts are provided by residues Tyr9, Lys45, 54–55 (QV), and 67–68 (QT). In terms of domain architecture, GST C-terminal spans 85–208 (DLKERALIDM…QPGSQRKPRL (124 aa)).

This sequence belongs to the GST superfamily. Alpha family. As to quaternary structure, homodimer or heterodimer of GSTA1 and GSTA2.

It carries out the reaction RX + glutathione = an S-substituted glutathione + a halide anion + H(+). The catalysed reaction is prostaglandin A2 + glutathione = prostaglandin A2-S-(R)-glutathione. The enzyme catalyses prostaglandin J2 + glutathione = prostaglandin J2-S-(R)-glutathione. It catalyses the reaction (13S)-hydroperoxy-(9Z,11E)-octadecadienoate + 2 glutathione = (13S)-hydroxy-(9Z,11E)-octadecadienoate + glutathione disulfide + H2O. It carries out the reaction androst-5-ene-3,17-dione = androst-4-ene-3,17-dione. Functionally, glutathione S-transferase that catalyzes the nucleophilic attack of the sulfur atom of glutathione on the electrophilic groups of a wide range of exogenous and endogenous compounds. Involved in the formation of glutathione conjugates of both prostaglandin A2 (PGA2) and prostaglandin J2 (PGJ2). It also catalyzes the isomerization of D5-androstene-3,17-dione (AD) into D4-androstene-3,17-dione and may therefore play an important role in hormone biosynthesis. Through its glutathione-dependent peroxidase activity toward the fatty acid hydroperoxide (13S)-hydroperoxy-(9Z,11E)-octadecadienoate/13-HPODE it is also involved in the metabolism of oxidized linoleic acid. This is Glutathione S-transferase from Gallus gallus (Chicken).